The chain runs to 202 residues: Small ribosomal subunit protein uS4 (202 aa).

The 78-residue stretch at 91–168 folds into the S4 RNA-binding domain; sequence SMLSSVLYNS…QKVPDYLEVD (78 aa).

The protein belongs to the universal ribosomal protein uS4 family. As to quaternary structure, part of the 30S ribosomal subunit. Contacts protein S5. The interaction surface between S4 and S5 is involved in control of translational fidelity.

In terms of biological role, one of the primary rRNA binding proteins, it binds directly to 16S rRNA where it nucleates assembly of the body of the 30S subunit. Functionally, with S5 and S12 plays an important role in translational accuracy. The sequence is that of Small ribosomal subunit protein uS4 from Ehrlichia ruminantium (strain Welgevonden).